A 339-amino-acid polypeptide reads, in one-letter code: Anthranilate phosphoribosyltransferase (339 aa).

5-phospho-alpha-D-ribose 1-diphosphate-binding positions include G79, 82-83 (GD), T87, 89-92 (NVST), 107-115 (KHGNRAVSS), and S119. G79 provides a ligand contact to anthranilate. Mg(2+) is bound at residue S91. N110 provides a ligand contact to anthranilate. R165 provides a ligand contact to anthranilate. Residues D224 and E225 each coordinate Mg(2+).

It belongs to the anthranilate phosphoribosyltransferase family. Homodimer. Requires Mg(2+) as cofactor.

The enzyme catalyses N-(5-phospho-beta-D-ribosyl)anthranilate + diphosphate = 5-phospho-alpha-D-ribose 1-diphosphate + anthranilate. Its pathway is amino-acid biosynthesis; L-tryptophan biosynthesis; L-tryptophan from chorismate: step 2/5. Functionally, catalyzes the transfer of the phosphoribosyl group of 5-phosphorylribose-1-pyrophosphate (PRPP) to anthranilate to yield N-(5'-phosphoribosyl)-anthranilate (PRA). The sequence is that of Anthranilate phosphoribosyltransferase from Geobacillus stearothermophilus (Bacillus stearothermophilus).